Here is a 281-residue protein sequence, read N- to C-terminus: Endochitinase At2g43610 (281 aa).

Residues 1–28 (MATQNAILKKALIIFLFTLTIMTGTAFS) form the signal peptide. Residues 29-66 (QNCGTNGCKGNMCCSRWGYCGTTKAYCGTGCQSGPCNS) form the Chitin-binding type-1 domain. Intrachain disulfides connect cysteine 31/cysteine 42, cysteine 36/cysteine 48, cysteine 41/cysteine 55, and cysteine 59/cysteine 64. Residues 86–281 (GTIASVITPA…GVTPGTNLSC (196 aa)) form a catalytic region. Residue glutamate 148 is the Proton donor of the active site. An N-linked (GlcNAc...) asparagine glycan is attached at asparagine 278.

It belongs to the glycosyl hydrolase 19 family. Chitinase class I subfamily.

It carries out the reaction Random endo-hydrolysis of N-acetyl-beta-D-glucosaminide (1-&gt;4)-beta-linkages in chitin and chitodextrins.. This chain is Endochitinase At2g43610, found in Arabidopsis thaliana (Mouse-ear cress).